We begin with the raw amino-acid sequence, 461 residues long: Asparagine--tRNA ligase (461 aa).

The protein belongs to the class-II aminoacyl-tRNA synthetase family. As to quaternary structure, homodimer.

The protein localises to the cytoplasm. It catalyses the reaction tRNA(Asn) + L-asparagine + ATP = L-asparaginyl-tRNA(Asn) + AMP + diphosphate + H(+). In Geotalea uraniireducens (strain Rf4) (Geobacter uraniireducens), this protein is Asparagine--tRNA ligase.